Here is a 310-residue protein sequence, read N- to C-terminus: Imidazolonepropionase (310 aa).

Residues Tyr42 and His75 each contribute to the 4-imidazolone-5-propanoate site. Tyr42 is a binding site for N-formimidoyl-L-glutamate. His140 is a Fe(3+) binding site. Position 140 (His140) interacts with Zn(2+). Glu143 contributes to the 4-imidazolone-5-propanoate binding site. Fe(3+) is bound at residue Asp215. A Zn(2+)-binding site is contributed by Asp215. N-formimidoyl-L-glutamate contacts are provided by Asn217 and Gly219. Ser220 is a 4-imidazolone-5-propanoate binding site.

The protein belongs to the metallo-dependent hydrolases superfamily. HutI family. It depends on Zn(2+) as a cofactor. Fe(3+) is required as a cofactor.

The protein resides in the cytoplasm. It catalyses the reaction 4-imidazolone-5-propanoate + H2O = N-formimidoyl-L-glutamate. It participates in amino-acid degradation; L-histidine degradation into L-glutamate; N-formimidoyl-L-glutamate from L-histidine: step 3/3. Functionally, catalyzes the hydrolytic cleavage of the carbon-nitrogen bond in imidazolone-5-propanoate to yield N-formimidoyl-L-glutamate. It is the third step in the universal histidine degradation pathway. This chain is Imidazolonepropionase (hutI), found in Streptococcus gordonii.